The sequence spans 240 residues: MSSEQLQDPVEPDKILSAVTQRGLRLESILTTHHHLDHAGGNLDLVTKCRKQGLEGLKVYGGDDRIGGLTDTVSHGYKXRLVATSTFIAWLHHRHTTGHICYLVTEENSTKEGAVFTGDTLFLGGCGRFFEGTAEQMFKALIEVLSKLPTTTKVYCGHEYTVKNLEFGLTVEPKNEALKHRLEAVKRLRASNQASVPGTIGEELATNPLMRVSEPDVLAHAKTTDPIKAMKTIREEKDRF.

Histidine 33, histidine 35, aspartate 37, histidine 38, histidine 95, and aspartate 119 together coordinate Zn(2+). Residues arginine 128, 158-160 (HEY), and 234-237 (REEK) each bind substrate. Histidine 158 lines the Zn(2+) pocket.

This sequence belongs to the metallo-beta-lactamase superfamily. Glyoxalase II family. Zn(2+) is required as a cofactor.

The enzyme catalyses an S-(2-hydroxyacyl)glutathione + H2O = a 2-hydroxy carboxylate + glutathione + H(+). It functions in the pathway secondary metabolite metabolism; methylglyoxal degradation; (R)-lactate from methylglyoxal: step 2/2. Its function is as follows. Thiolesterase that catalyzes the hydrolysis of S-D-lactoyl-glutathione to form glutathione and D-lactic acid. In Schistosoma mansoni (Blood fluke), this protein is Probable hydroxyacylglutathione hydrolase.